The sequence spans 386 residues: Delta(7)-sterol 5(6)-desaturase (386 aa).

The next 3 membrane-spanning stretches (helical) occupy residues Val-119–Tyr-139, Ile-172–Phe-192, and Ala-206–His-226. The 124-residue stretch at Phe-214 to Asn-337 folds into the Fatty acid hydroxylase domain. The Histidine box-1 signature appears at His-226–His-230. A Histidine box-2 motif is present at residues His-239 to His-243. The helical transmembrane segment at Pro-272–Trp-292 threads the bilayer. The Histidine box-3 motif lies at His-314–His-318.

It belongs to the sterol desaturase family. Fe cation serves as cofactor.

It localises to the endoplasmic reticulum membrane. The catalysed reaction is a Delta(7)-sterol + 2 Fe(II)-[cytochrome b5] + O2 + 2 H(+) = a Delta(5),Delta(7)-sterol + 2 Fe(III)-[cytochrome b5] + 2 H2O. It participates in steroid metabolism; ergosterol biosynthesis; ergosterol from zymosterol: step 3/5. In terms of biological role, catalyzes the introduction of a C-5 double bond in the B ring of ergosterol. May contribute to the regulation of ergosterol biosynthesis. This chain is Delta(7)-sterol 5(6)-desaturase (ERG3), found in Candida dubliniensis (strain CD36 / ATCC MYA-646 / CBS 7987 / NCPF 3949 / NRRL Y-17841) (Yeast).